A 276-amino-acid polypeptide reads, in one-letter code: Small ribosomal subunit protein uS2 (276 aa).

Serine 2 bears the N-acetylserine mark.

This sequence belongs to the universal ribosomal protein uS2 family. Component of the small ribosomal subunit. Mature ribosomes consist of a small (40S) and a large (60S) subunit. The 40S subunit contains about 33 different proteins and 1 molecule of RNA (18S). The 60S subunit contains about 49 different proteins and 3 molecules of RNA (28S, 5.8S and 5S). Interacts with rps-21.

It is found in the cytoplasm. Functionally, required for the assembly and/or stability of the 40S ribosomal subunit. Required for the processing of the 20S rRNA-precursor to mature 18S rRNA in a late step of the maturation of 40S ribosomal subunits. Involved in cold-warm shock-induced translocation of the RNA exosome components from the nucleolus to nucleoplasm. This is Small ribosomal subunit protein uS2 from Caenorhabditis elegans.